A 216-amino-acid polypeptide reads, in one-letter code: Inner membrane assembly complex subunit 22 (216 aa).

The transit peptide at Met-1–Thr-26 directs the protein to the mitochondrion. At Val-27–Thr-43 the chain is on the mitochondrial matrix side. A helical membrane pass occupies residues Met-44–Ala-63. Positions Glu-64 to Asn-93 form a coiled coil. Residues Glu-64–Leu-216 are Mitochondrial intermembrane-facing.

In terms of assembly, component of the inner membrane assembly (INA) complex, composed of INA17 and INA22. Interacts with a subset of F(1)F(0)-ATP synthase subunits of the F(1)-domain and the peripheral stalk.

It localises to the mitochondrion inner membrane. In terms of biological role, component of the INA complex (INAC) that promotes the biogenesis of mitochondrial F(1)F(0)-ATP synthase. INAC facilitates the assembly of the peripheral stalk and promotes the assembly of the catalytic F(1)-domain with the membrane-embedded F(0)-domain. The sequence is that of Inner membrane assembly complex subunit 22 from Saccharomyces cerevisiae (strain ATCC 204508 / S288c) (Baker's yeast).